A 182-amino-acid chain; its full sequence is ATP-dependent protease subunit HslV (182 aa).

Threonine 6 is an active-site residue. 3 residues coordinate Na(+): alanine 164, cysteine 167, and threonine 170.

It belongs to the peptidase T1B family. HslV subfamily. As to quaternary structure, a double ring-shaped homohexamer of HslV is capped on each side by a ring-shaped HslU homohexamer. The assembly of the HslU/HslV complex is dependent on binding of ATP.

The protein localises to the cytoplasm. It carries out the reaction ATP-dependent cleavage of peptide bonds with broad specificity.. Allosterically activated by HslU binding. In terms of biological role, protease subunit of a proteasome-like degradation complex believed to be a general protein degrading machinery. The sequence is that of ATP-dependent protease subunit HslV from Borreliella afzelii (strain PKo) (Borrelia afzelii).